The following is a 662-amino-acid chain: Threonine--tRNA ligase (662 aa).

Residues 1-64 (MSQSVSLTFP…ADGKIEIITR (64 aa)) enclose the TGS domain. Residues 245–547 (DHRRLGREMD…LIENFAGHMP (303 aa)) are catalytic. Residues cysteine 341, histidine 392, and histidine 524 each coordinate Zn(2+).

The protein belongs to the class-II aminoacyl-tRNA synthetase family. Homodimer. Zn(2+) is required as a cofactor.

Its subcellular location is the cytoplasm. It catalyses the reaction tRNA(Thr) + L-threonine + ATP = L-threonyl-tRNA(Thr) + AMP + diphosphate + H(+). Its function is as follows. Catalyzes the attachment of threonine to tRNA(Thr) in a two-step reaction: L-threonine is first activated by ATP to form Thr-AMP and then transferred to the acceptor end of tRNA(Thr). Also edits incorrectly charged L-seryl-tRNA(Thr). This chain is Threonine--tRNA ligase, found in Rhizobium rhizogenes (strain K84 / ATCC BAA-868) (Agrobacterium radiobacter).